We begin with the raw amino-acid sequence, 299 residues long: Probable lipid kinase YegS-like (299 aa).

A DAGKc domain is found at 2–133 (ATYPESLLIL…VDIAQVNDKT (132 aa)). ATP-binding positions include T40, 66–72 (GDGTINE), and T95. Mg(2+) contacts are provided by L215, D218, and L220. E271 functions as the Proton acceptor in the catalytic mechanism.

It belongs to the diacylglycerol/lipid kinase family. YegS lipid kinase subfamily. Requires Mg(2+) as cofactor. Ca(2+) serves as cofactor.

It localises to the cytoplasm. Its function is as follows. Probably phosphorylates lipids; the in vivo substrate is unknown. The protein is Probable lipid kinase YegS-like of Enterobacter sp. (strain 638).